We begin with the raw amino-acid sequence, 217 residues long: Guanylate kinase (217 aa).

In terms of domain architecture, Guanylate kinase-like spans 15 to 194 (GLMLVLSSPS…AYQRLKRILL (180 aa)). 22 to 29 (SPSGAGKT) is a binding site for ATP.

The protein belongs to the guanylate kinase family.

Its subcellular location is the cytoplasm. It catalyses the reaction GMP + ATP = GDP + ADP. In terms of biological role, essential for recycling GMP and indirectly, cGMP. This Hyphomonas neptunium (strain ATCC 15444) protein is Guanylate kinase.